The primary structure comprises 187 residues: Ribose 1,5-bisphosphate phosphokinase PhnN (187 aa).

Residue 10–17 coordinates ATP; that stretch reads GPSGSGKD.

It belongs to the ribose 1,5-bisphosphokinase family.

The catalysed reaction is alpha-D-ribose 1,5-bisphosphate + ATP = 5-phospho-alpha-D-ribose 1-diphosphate + ADP. The protein operates within metabolic intermediate biosynthesis; 5-phospho-alpha-D-ribose 1-diphosphate biosynthesis; 5-phospho-alpha-D-ribose 1-diphosphate from D-ribose 5-phosphate (route II): step 3/3. Functionally, catalyzes the phosphorylation of ribose 1,5-bisphosphate to 5-phospho-D-ribosyl alpha-1-diphosphate (PRPP). The chain is Ribose 1,5-bisphosphate phosphokinase PhnN from Klebsiella pneumoniae subsp. pneumoniae (strain ATCC 700721 / MGH 78578).